We begin with the raw amino-acid sequence, 490 residues long: MRSNPTTSGSEVSAVEKKNLGRIVKIIGPVLDVAFPPGKMPNIYNALVVQGRDNEQTNVTCEVQQLLGNNRVRAVAMSDTNGLMRGMEVINTGAPISVPVGGSTLGRIFNVLGQPVDNLGPVDTNTTSPIHRSAPAFIQLDTKLSIFETGIKVVDLLAPYRRGGKIGLFGGAGVGKTVLIMELINNIAKAHGGVSVFGGVGERTREGNDLYMEMKESGVINEENIAESKVALVYGQMNEPPGARMRVGLTALTMAEYFRDVNEQDVLLFIDNIFRFVQAGSEVSALLGRMPSAVGYQPTLSTEMGTLQERITSTKEGSITSIQAVYVPADDLTDPAPATTFAHLDATTVLSRGLAAKGIYPAVDPLDSTSTMLQPRIVGEEHYETAQRVKQTLQRYKELQDIIAILGLDELSEEDRLTVARARKIERFLSQPFFVAEVFTGSPGKYVGLAETIRGFQLILSGELDGLPEQAFYLVGNIDEATAKAMNLKT.

Residue 170-177 (GGAGVGKT) coordinates ATP.

It belongs to the ATPase alpha/beta chains family. As to quaternary structure, F-type ATPases have 2 components, CF(1) - the catalytic core - and CF(0) - the membrane proton channel. CF(1) has five subunits: alpha(3), beta(3), gamma(1), delta(1), epsilon(1). CF(0) has four main subunits: a(1), b(1), b'(1) and c(9-12).

Its subcellular location is the plastid. The protein localises to the chloroplast thylakoid membrane. It catalyses the reaction ATP + H2O + 4 H(+)(in) = ADP + phosphate + 5 H(+)(out). Functionally, produces ATP from ADP in the presence of a proton gradient across the membrane. The catalytic sites are hosted primarily by the beta subunits. In Calystegia sepium (Hedge bindweed), this protein is ATP synthase subunit beta, chloroplastic.